The following is a 21-amino-acid chain: Bombinin-H4 (21 aa).

Residue I2 is modified to D-allo-isoleucine. I20 carries the isoleucine amide modification.

The protein belongs to the bombinin family. As to expression, expressed by the skin glands.

It is found in the secreted. Has antimicrobial and hemolytic activities. The chain is Bombinin-H4 from Bombina variegata (Yellow-bellied toad).